The primary structure comprises 107 residues: Phosphoribosyl-ATP pyrophosphatase (107 aa).

Belongs to the PRA-PH family.

It is found in the cytoplasm. It carries out the reaction 1-(5-phospho-beta-D-ribosyl)-ATP + H2O = 1-(5-phospho-beta-D-ribosyl)-5'-AMP + diphosphate + H(+). The protein operates within amino-acid biosynthesis; L-histidine biosynthesis; L-histidine from 5-phospho-alpha-D-ribose 1-diphosphate: step 2/9. The polypeptide is Phosphoribosyl-ATP pyrophosphatase (Neisseria gonorrhoeae (strain ATCC 700825 / FA 1090)).